A 631-amino-acid polypeptide reads, in one-letter code: Tail sheath protein (631 aa).

The protein belongs to the myoviridae tail sheath protein family. In terms of assembly, homomultimer.

Its subcellular location is the virion. The protein resides in the host cytoplasm. Polymerizes as an extended structure around the baseplate-tail tube complex. During ejection, the sheath shifts to a contracted form, thereby making the inner tail tube protrude through the host cell envelope. This Salmonella typhi protein is Tail sheath protein.